The sequence spans 263 residues: Cell division protein DivIB (263 aa).

Residues 1-32 are Cytoplasmic-facing; the sequence is MNPGQDREKIVNIEERIPKIKEQRKQKANRRL. The chain crosses the membrane as a helical span at residues 33–53; sequence ISFIMLFFIMVLIIVYLQTPI. The tract at residues 51–123 is alpha; sequence TPISKVSTIS…NKINIAIEEY (73 aa). One can recognise a POTRA domain in the interval 54–123; that stretch reads SKVSTISVTG…NKINIAIEEY (70 aa). Residues 54–263 lie on the Extracellular side of the membrane; the sequence is SKVSTISVTG…DKAAKKEDEN (210 aa). Residues 124–251 are beta; it reads KAIAYLEKDD…EVATYFEEFG (128 aa). A gamma region spans residues 229–263; that stretch reads SQLSSNKKGIIHLEVATYFEEFGKNDKAAKKEDEN.

This sequence belongs to the FtsQ/DivIB family. DivIB subfamily. In terms of assembly, interacts with FtsL, DivIC and PBP-2B.

It localises to the cell membrane. Functionally, cell division protein that may be involved in stabilizing or promoting the assembly of the division complex. Plays an essential role in division at high temperatures, maybe by protecting FtsL from degradation or by promoting formation of the FtsL-DivIC complex. May modulate the transpeptidase activity of PBP-2B. Also required for efficient sporulation at all temperatures. Could be directly involved in the engulfment process or be required to form a sporulation septum competent for engulfment. Influences the Spo0J/Soj system of chromosome segregation. In Bacillus subtilis (strain 168), this protein is Cell division protein DivIB.